Consider the following 225-residue polypeptide: Enolase-phosphatase E1 (225 aa).

The protein belongs to the HAD-like hydrolase superfamily. MasA/MtnC family. In terms of assembly, monomer. The cofactor is Mg(2+).

The catalysed reaction is 5-methylsulfanyl-2,3-dioxopentyl phosphate + H2O = 1,2-dihydroxy-5-(methylsulfanyl)pent-1-en-3-one + phosphate. It functions in the pathway amino-acid biosynthesis; L-methionine biosynthesis via salvage pathway; L-methionine from S-methyl-5-thio-alpha-D-ribose 1-phosphate: step 3/6. Its pathway is amino-acid biosynthesis; L-methionine biosynthesis via salvage pathway; L-methionine from S-methyl-5-thio-alpha-D-ribose 1-phosphate: step 4/6. Bifunctional enzyme that catalyzes the enolization of 2,3-diketo-5-methylthiopentyl-1-phosphate (DK-MTP-1-P) into the intermediate 2-hydroxy-3-keto-5-methylthiopentenyl-1-phosphate (HK-MTPenyl-1-P), which is then dephosphorylated to form the acireductone 1,2-dihydroxy-3-keto-5-methylthiopentene (DHK-MTPene). The polypeptide is Enolase-phosphatase E1 (Pseudomonas aeruginosa (strain UCBPP-PA14)).